The chain runs to 288 residues: Light-independent protochlorophyllide reductase iron-sulfur ATP-binding protein (288 aa).

Residues 10-15 and Lys-39 contribute to the ATP site; that span reads GIGKST. Ser-14 is a binding site for Mg(2+). [4Fe-4S] cluster is bound by residues Cys-95 and Cys-129. 180–181 contributes to the ATP binding site; sequence NR.

It belongs to the NifH/BchL/ChlL family. In terms of assembly, homodimer. Protochlorophyllide reductase is composed of three subunits; ChlL, ChlN and ChlB. Requires [4Fe-4S] cluster as cofactor.

It localises to the plastid. The protein localises to the chloroplast. It carries out the reaction chlorophyllide a + oxidized 2[4Fe-4S]-[ferredoxin] + 2 ADP + 2 phosphate = protochlorophyllide a + reduced 2[4Fe-4S]-[ferredoxin] + 2 ATP + 2 H2O. It functions in the pathway porphyrin-containing compound metabolism; chlorophyll biosynthesis (light-independent). Functionally, component of the dark-operative protochlorophyllide reductase (DPOR) that uses Mg-ATP and reduced ferredoxin to reduce ring D of protochlorophyllide (Pchlide) to form chlorophyllide a (Chlide). This reaction is light-independent. The L component serves as a unique electron donor to the NB-component of the complex, and binds Mg-ATP. The polypeptide is Light-independent protochlorophyllide reductase iron-sulfur ATP-binding protein (Chara vulgaris (Common stonewort)).